We begin with the raw amino-acid sequence, 594 residues long: F-box/LRR-repeat protein At3g58980 (594 aa).

An F-box domain is found at 1 to 49 (MDRISNLPNEIICHIVSFLSAKEAAFASILSKRWRNLFTIVIKLQFDDS). LRR repeat units lie at residues 103 to 125 (ILDL…VFTC), 128 to 151 (LVKL…DAFL), 152 to 174 (PALE…AFEK), 203 to 218 (SPTL…DLYE), 219 to 242 (CEFT…AVPD), 249 to 272 (LDSL…GYVD), 288 to 314 (LRNV…AIPV), 315 to 339 (FKNL…FLPF), 344 to 369 (CPNL…VCHC), 403 to 414 (LEKLSGLKLVKL), 415 to 437 (HSLT…SSKC), 450 to 474 (LPSL…AFQK), 503 to 518 (SQTL…YWAE), 519 to 541 (HNLE…AHVP), and 584 to 594 (LRNVEILRLWM).

This chain is F-box/LRR-repeat protein At3g58980, found in Arabidopsis thaliana (Mouse-ear cress).